An 85-amino-acid chain; its full sequence is RNA-binding protein Hfq (85 aa).

One can recognise a Sm domain in the interval 9–68; that stretch reads DPFLNALRRERIPVSIYLVNGIKLQGQVESFDQFVILLKNTVSQMVYKHAISTVVPARPV.

This sequence belongs to the Hfq family. In terms of assembly, homohexamer.

Functionally, RNA chaperone that binds small regulatory RNA (sRNAs) and mRNAs to facilitate mRNA translational regulation in response to envelope stress, environmental stress and changes in metabolite concentrations. Also binds with high specificity to tRNAs. In Tolumonas auensis (strain DSM 9187 / NBRC 110442 / TA 4), this protein is RNA-binding protein Hfq.